Consider the following 38-residue polypeptide: Defensin (38 aa).

3 disulfide bridges follow: C4–C26, C11–C34, and C15–C36.

This sequence belongs to the invertebrate defensin family. Type 2 subfamily.

The protein localises to the secreted. Functionally, mediates the inducible antibacterial activity in larvae of A.cyanea. The protein is Defensin of Aeshna cyanea (Southern hawker dragonfly).